The following is an 819-amino-acid chain: Phenylalanine--tRNA ligase beta subunit (819 aa).

A tRNA-binding domain is found at 42–154 (RGGLRGLVIG…SDAPVGMPAA (113 aa)). One can recognise a B5 domain in the interval 412–488 (LKPHLISLSF…RIYGYNQVEL (77 aa)). Residues D466, D472, E475, and E476 each contribute to the Mg(2+) site. An FDX-ACB domain is found at 726 to 819 (PRFPEVKRDL…LEQKLGAQLR (94 aa)).

This sequence belongs to the phenylalanyl-tRNA synthetase beta subunit family. Type 1 subfamily. In terms of assembly, tetramer of two alpha and two beta subunits. It depends on Mg(2+) as a cofactor.

The protein resides in the cytoplasm. It catalyses the reaction tRNA(Phe) + L-phenylalanine + ATP = L-phenylalanyl-tRNA(Phe) + AMP + diphosphate + H(+). This is Phenylalanine--tRNA ligase beta subunit from Porphyromonas gingivalis (strain ATCC BAA-308 / W83).